The chain runs to 142 residues: Putative pre-16S rRNA nuclease (142 aa).

The protein belongs to the YqgF nuclease family.

The protein localises to the cytoplasm. Functionally, could be a nuclease involved in processing of the 5'-end of pre-16S rRNA. The sequence is that of Putative pre-16S rRNA nuclease from Staphylococcus epidermidis (strain ATCC 35984 / DSM 28319 / BCRC 17069 / CCUG 31568 / BM 3577 / RP62A).